The sequence spans 330 residues: Aspartate--ammonia ligase (330 aa).

This sequence belongs to the class-II aminoacyl-tRNA synthetase family. AsnA subfamily.

Its subcellular location is the cytoplasm. The catalysed reaction is L-aspartate + NH4(+) + ATP = L-asparagine + AMP + diphosphate + H(+). It functions in the pathway amino-acid biosynthesis; L-asparagine biosynthesis; L-asparagine from L-aspartate (ammonia route): step 1/1. The polypeptide is Aspartate--ammonia ligase (Cronobacter sakazakii (strain ATCC BAA-894) (Enterobacter sakazakii)).